The chain runs to 130 residues: Small ribosomal subunit protein uS9 (130 aa).

Belongs to the universal ribosomal protein uS9 family.

The polypeptide is Small ribosomal subunit protein uS9 (Salmonella paratyphi C (strain RKS4594)).